We begin with the raw amino-acid sequence, 244 residues long: tRNA (guanine-N(1)-)-methyltransferase (244 aa).

S-adenosyl-L-methionine is bound by residues glycine 111 and 130-135 (IGDYVL).

It belongs to the RNA methyltransferase TrmD family. In terms of assembly, homodimer.

It is found in the cytoplasm. It carries out the reaction guanosine(37) in tRNA + S-adenosyl-L-methionine = N(1)-methylguanosine(37) in tRNA + S-adenosyl-L-homocysteine + H(+). Functionally, specifically methylates guanosine-37 in various tRNAs. The protein is tRNA (guanine-N(1)-)-methyltransferase of Phytoplasma australiense.